The chain runs to 377 residues: Leukocyte elastase inhibitor (377 aa).

M1 is modified (N-acetylmethionine). K136 carries the post-translational modification N6-acetyllysine. The residue at position 298 (S298) is a Phosphoserine. Positions 349–377 (EFVADHPFIFFIRHKPSSNILFLGRLSSP) are CARD-binding motif (CBM).

The protein belongs to the serpin family. Ov-serpin subfamily. In terms of assembly, monomer. Interacts (via C-terminus) with CASP1; CASP4 (via CARD domain) and CASP5; these interactions regulate the activity of inflammatory caspases. Interacts with PRTN3. Interacts with GZMH.

It localises to the secreted. Its subcellular location is the cytoplasm. The protein localises to the cytolytic granule. It is found in the early endosome. Functionally, neutrophil serine protease inhibitor that plays an essential role in the regulation of the innate immune response, inflammation and cellular homeostasis. Acts primarily to protect the cell from proteases released in the cytoplasm during stress or infection. These proteases are important in killing microbes but when released from granules, these potent enzymes also destroy host proteins and contribute to mortality. Regulates the activity of the neutrophil proteases elastase, cathepsin G, proteinase-3, chymase, chymotrypsin, and kallikrein-3. Also acts as a potent intracellular inhibitor of GZMH by directly blocking its proteolytic activity. During inflammation, limits the activity of inflammatory caspases CASP1, CASP4 and CASP5 by suppressing their caspase-recruitment domain (CARD) oligomerization and enzymatic activation. When secreted, promotes the proliferation of beta-cells via its protease inhibitory function. The protein is Leukocyte elastase inhibitor (SERPINB1) of Bos taurus (Bovine).